Here is a 203-residue protein sequence, read N- to C-terminus: Dual-action ribosomal maturation protein DarP (203 aa).

Residues 1–13 (MQPMTRNSRNSPG) are compositionally biased toward polar residues. The interval 1–39 (MQPMTRNSRNSPGSRFPGAFAPEPDMDEPKSKSQKKRDM) is disordered. Over residues 27–39 (DEPKSKSQKKRDM) the composition is skewed to basic and acidic residues.

This sequence belongs to the DarP family.

The protein localises to the cytoplasm. Functionally, member of a network of 50S ribosomal subunit biogenesis factors which assembles along the 30S-50S interface, preventing incorrect 23S rRNA structures from forming. Promotes peptidyl transferase center (PTC) maturation. This is Dual-action ribosomal maturation protein DarP from Cupriavidus pinatubonensis (strain JMP 134 / LMG 1197) (Cupriavidus necator (strain JMP 134)).